The chain runs to 318 residues: Probable arabinan endo-1,5-alpha-L-arabinosidase C (318 aa).

Residues 1–28 form the signal peptide; that stretch reads MLSFVLLLCVALVNAYSDPGACSGTCWA. The active-site Proton acceptor is D30. Residues N72, N80, and N188 are each glycosylated (N-linked (GlcNAc...) asparagine). The active-site Proton donor is E196. N277 carries an N-linked (GlcNAc...) asparagine glycan.

It belongs to the glycosyl hydrolase 43 family.

It is found in the secreted. The catalysed reaction is Endohydrolysis of (1-&gt;5)-alpha-arabinofuranosidic linkages in (1-&gt;5)-arabinans.. Its pathway is glycan metabolism; L-arabinan degradation. In terms of biological role, endo-1,5-alpha-L-arabinanase involved in degradation of pectin. Its preferred substrate is linear 1,5-alpha-L-arabinan. In Aspergillus niger (strain ATCC MYA-4892 / CBS 513.88 / FGSC A1513), this protein is Probable arabinan endo-1,5-alpha-L-arabinosidase C (abnC).